Reading from the N-terminus, the 329-residue chain is Ribosomal RNA small subunit methyltransferase H (329 aa).

Residues 34–36, D59, F86, D112, and Q119 each bind S-adenosyl-L-methionine; that span reads GGH.

The protein belongs to the methyltransferase superfamily. RsmH family.

It is found in the cytoplasm. The enzyme catalyses cytidine(1402) in 16S rRNA + S-adenosyl-L-methionine = N(4)-methylcytidine(1402) in 16S rRNA + S-adenosyl-L-homocysteine + H(+). Specifically methylates the N4 position of cytidine in position 1402 (C1402) of 16S rRNA. This Chlorobium phaeobacteroides (strain DSM 266 / SMG 266 / 2430) protein is Ribosomal RNA small subunit methyltransferase H.